The sequence spans 330 residues: Phosphate acyltransferase (330 aa).

The protein belongs to the PlsX family. In terms of assembly, homodimer. Probably interacts with PlsY.

It is found in the cytoplasm. The enzyme catalyses a fatty acyl-[ACP] + phosphate = an acyl phosphate + holo-[ACP]. It functions in the pathway lipid metabolism; phospholipid metabolism. In terms of biological role, catalyzes the reversible formation of acyl-phosphate (acyl-PO(4)) from acyl-[acyl-carrier-protein] (acyl-ACP). This enzyme utilizes acyl-ACP as fatty acyl donor, but not acyl-CoA. The polypeptide is Phosphate acyltransferase (Streptococcus agalactiae serotype III (strain NEM316)).